Consider the following 379-residue polypeptide: L-lactate dehydrogenase (379 aa).

The region spanning 1–379 is the FMN hydroxy acid dehydrogenase domain; that stretch reads MIISASTDYR…LSRDSLVKIP (379 aa). Tyrosine 24 contacts substrate. Serine 106 and glutamine 127 together coordinate FMN. Residue tyrosine 129 coordinates substrate. Threonine 155 lines the FMN pocket. Arginine 164 lines the substrate pocket. Residue lysine 251 participates in FMN binding. Catalysis depends on histidine 275, which acts as the Proton acceptor. Arginine 278 is a substrate binding site. 306–330 serves as a coordination point for FMN; it reads DSGIRTGLDVVRMLALGADCTLLGR.

Belongs to the FMN-dependent alpha-hydroxy acid dehydrogenase family. FMN serves as cofactor.

The protein resides in the cell inner membrane. It carries out the reaction (S)-lactate + A = pyruvate + AH2. Its function is as follows. Catalyzes the conversion of L-lactate to pyruvate. Is coupled to the respiratory chain. In Vibrio parahaemolyticus serotype O3:K6 (strain RIMD 2210633), this protein is L-lactate dehydrogenase.